A 220-amino-acid polypeptide reads, in one-letter code: Glutathione S-transferase 2 (220 aa).

One can recognise a GST N-terminal domain in the interval 2-88 (VVTLGYWDIR…YIARKHNMCG (87 aa)). Glutathione contacts are provided by residues 7–8 (YW), 43–46 (PSDW), K50, 59–60 (NL), and 72–73 (QS). Residues 90-208 (TEVEKQRVDV…RSGRFMKAPI (119 aa)) enclose the GST C-terminal domain. Y116 contributes to the substrate binding site.

This sequence belongs to the GST superfamily. Mu family. As to quaternary structure, homodimer.

It localises to the cytoplasm. It catalyses the reaction RX + glutathione = an S-substituted glutathione + a halide anion + H(+). Functionally, conjugation of reduced glutathione to a wide number of exogenous and endogenous hydrophobic electrophiles. Participates in the formation of novel hepoxilin regioisomers. This chain is Glutathione S-transferase 2 (GSTM2), found in Gallus gallus (Chicken).